Consider the following 447-residue polypeptide: Phosphoglucosamine mutase (447 aa).

Residue serine 104 is the Phosphoserine intermediate of the active site. 4 residues coordinate Mg(2+): serine 104, aspartate 243, aspartate 245, and aspartate 247. A Phosphoserine modification is found at serine 104.

This sequence belongs to the phosphohexose mutase family. Mg(2+) serves as cofactor. Activated by phosphorylation.

The enzyme catalyses alpha-D-glucosamine 1-phosphate = D-glucosamine 6-phosphate. In terms of biological role, catalyzes the conversion of glucosamine-6-phosphate to glucosamine-1-phosphate. The sequence is that of Phosphoglucosamine mutase from Corynebacterium glutamicum (strain ATCC 13032 / DSM 20300 / JCM 1318 / BCRC 11384 / CCUG 27702 / LMG 3730 / NBRC 12168 / NCIMB 10025 / NRRL B-2784 / 534).